Here is a 121-residue protein sequence, read N- to C-terminus: Small ribosomal subunit protein uS13 (121 aa).

The segment at 89–121 is disordered; the sequence is MRHRRGLPVRGQNTKNNARTRKGKKVSIAGKKK. The segment covering 106–121 has biased composition (basic residues); sequence ARTRKGKKVSIAGKKK.

It belongs to the universal ribosomal protein uS13 family. Part of the 30S ribosomal subunit. Forms a loose heterodimer with protein S19. Forms two bridges to the 50S subunit in the 70S ribosome.

Located at the top of the head of the 30S subunit, it contacts several helices of the 16S rRNA. In the 70S ribosome it contacts the 23S rRNA (bridge B1a) and protein L5 of the 50S subunit (bridge B1b), connecting the 2 subunits; these bridges are implicated in subunit movement. Contacts the tRNAs in the A and P-sites. This Latilactobacillus sakei subsp. sakei (strain 23K) (Lactobacillus sakei subsp. sakei) protein is Small ribosomal subunit protein uS13.